The primary structure comprises 449 residues: Phosphoglucosamine mutase (449 aa).

Ser-101 acts as the Phosphoserine intermediate in catalysis. Ser-101, Asp-242, Asp-244, and Asp-246 together coordinate Mg(2+). Ser-101 is subject to Phosphoserine.

It belongs to the phosphohexose mutase family. Requires Mg(2+) as cofactor. Post-translationally, activated by phosphorylation.

It carries out the reaction alpha-D-glucosamine 1-phosphate = D-glucosamine 6-phosphate. Catalyzes the conversion of glucosamine-6-phosphate to glucosamine-1-phosphate. In Bradyrhizobium sp. (strain BTAi1 / ATCC BAA-1182), this protein is Phosphoglucosamine mutase.